Consider the following 507-residue polypeptide: ATP synthase subunit alpha, chloroplastic (507 aa).

An ATP-binding site is contributed by 170 to 177 (GDRQTGKT).

It belongs to the ATPase alpha/beta chains family. As to quaternary structure, F-type ATPases have 2 components, CF(1) - the catalytic core - and CF(0) - the membrane proton channel. CF(1) has five subunits: alpha(3), beta(3), gamma(1), delta(1), epsilon(1). CF(0) has four main subunits: a, b, b' and c.

It localises to the plastid. The protein localises to the chloroplast thylakoid membrane. The enzyme catalyses ATP + H2O + 4 H(+)(in) = ADP + phosphate + 5 H(+)(out). Its function is as follows. Produces ATP from ADP in the presence of a proton gradient across the membrane. The alpha chain is a regulatory subunit. This is ATP synthase subunit alpha, chloroplastic from Ranunculus macranthus (Large buttercup).